The chain runs to 181 residues: Protein GrpE (181 aa).

Residues 1–20 show a composition bias toward polar residues; the sequence is MENTQENPASQSAEENGSET. A disordered region spans residues 1 to 39; the sequence is MENTQENPASQSAEENGSETQAAQDAAPAAEAADAALAE. Over residues 21–39 the composition is skewed to low complexity; sequence QAAQDAAPAAEAADAALAE.

It belongs to the GrpE family. As to quaternary structure, homodimer.

The protein resides in the cytoplasm. In terms of biological role, participates actively in the response to hyperosmotic and heat shock by preventing the aggregation of stress-denatured proteins, in association with DnaK and GrpE. It is the nucleotide exchange factor for DnaK and may function as a thermosensor. Unfolded proteins bind initially to DnaJ; upon interaction with the DnaJ-bound protein, DnaK hydrolyzes its bound ATP, resulting in the formation of a stable complex. GrpE releases ADP from DnaK; ATP binding to DnaK triggers the release of the substrate protein, thus completing the reaction cycle. Several rounds of ATP-dependent interactions between DnaJ, DnaK and GrpE are required for fully efficient folding. This is Protein GrpE from Burkholderia multivorans (strain ATCC 17616 / 249).